We begin with the raw amino-acid sequence, 267 residues long: 3-methyl-2-oxobutanoate hydroxymethyltransferase (267 aa).

The Mg(2+) site is built by Asp-45 and Asp-84. Residues 45–46 (DS), Asp-84, and Lys-113 contribute to the 3-methyl-2-oxobutanoate site. Glu-115 is a Mg(2+) binding site. Catalysis depends on Glu-182, which acts as the Proton acceptor.

The protein belongs to the PanB family. As to quaternary structure, homodecamer; pentamer of dimers. It depends on Mg(2+) as a cofactor.

Its subcellular location is the cytoplasm. It catalyses the reaction 3-methyl-2-oxobutanoate + (6R)-5,10-methylene-5,6,7,8-tetrahydrofolate + H2O = 2-dehydropantoate + (6S)-5,6,7,8-tetrahydrofolate. It functions in the pathway cofactor biosynthesis; coenzyme A biosynthesis. Its function is as follows. Catalyzes the reversible reaction in which hydroxymethyl group from 5,10-methylenetetrahydrofolate is transferred onto alpha-ketoisovalerate to form ketopantoate. The sequence is that of 3-methyl-2-oxobutanoate hydroxymethyltransferase from Saccharolobus islandicus (strain L.S.2.15 / Lassen #1) (Sulfolobus islandicus).